The sequence spans 285 residues: Geranyl diphosphate 2-C-methyltransferase (285 aa).

Belongs to the geranyl diphosphate 2-C-methyltransferase family. Mg(2+) is required as a cofactor.

The catalysed reaction is (2E)-geranyl diphosphate + S-adenosyl-L-methionine = (E)-2-methylgeranyl diphosphate + S-adenosyl-L-homocysteine + H(+). Catalyzes the SAM-dependent methylation of geranyl diphosphate (GPP) to yield (E)-2-methylgeranyl diphosphate (2-MeGPP). The sequence is that of Geranyl diphosphate 2-C-methyltransferase from Saccharopolyspora erythraea (strain ATCC 11635 / DSM 40517 / JCM 4748 / NBRC 13426 / NCIMB 8594 / NRRL 2338).